The following is a 292-amino-acid chain: uncharacterized protein (292 aa).

The NADP(+) site is built by Leu-17, Asp-55, Asn-82, and Lys-115. Residue Ser-134 is the Proton donor of the active site. Residues Tyr-148, Lys-152, and Thr-184 each contribute to the NADP(+) site. Tyr-148 (proton acceptor) is an active-site residue. Lys-152 acts as the Lowers pKa of active site Tyr in catalysis.

Belongs to the short-chain dehydrogenases/reductases (SDR) family.

It localises to the cytoplasm. This is an uncharacterized protein from Schizosaccharomyces pombe (strain 972 / ATCC 24843) (Fission yeast).